The primary structure comprises 218 residues: Adenylate kinase (218 aa).

10-15 (GAGKGT) contributes to the ATP binding site. Residues 30–59 (STGDMLRAAVKAGTPLGIAAKKIMDEGGLV) form an NMP region. AMP-binding positions include threonine 31, arginine 36, 57-59 (GLV), 85-88 (GFPR), and glutamine 92. The LID stretch occupies residues 122 to 159 (GRRVHPASGRTYHVKFNPPKVAGKDDLTGEELIQRDDD). ATP is bound by residues arginine 123 and 132–133 (TY). Residues arginine 156 and arginine 167 each coordinate AMP. Glycine 203 serves as a coordination point for ATP.

The protein belongs to the adenylate kinase family. As to quaternary structure, monomer.

It is found in the cytoplasm. The catalysed reaction is AMP + ATP = 2 ADP. The protein operates within purine metabolism; AMP biosynthesis via salvage pathway; AMP from ADP: step 1/1. Catalyzes the reversible transfer of the terminal phosphate group between ATP and AMP. Plays an important role in cellular energy homeostasis and in adenine nucleotide metabolism. The chain is Adenylate kinase from Janthinobacterium sp. (strain Marseille) (Minibacterium massiliensis).